A 1311-amino-acid polypeptide reads, in one-letter code: Zinc finger protein 423 (1311 aa).

A compositionally biased stretch (basic residues) spans 1 to 11 (MSRRKQAKPRS). 3 disordered regions span residues 1-21 (MSRR…EASD), 34-70 (GGLE…EDVE), and 95-123 (AHRC…VASP). The span at 41 to 54 (ECDRKSSRALEDRN) shows a compositional bias: basic and acidic residues. A phosphoserine mark is found at Ser55 and Ser58. The C2H2-type 1; degenerate zinc-finger motif lies at 75–101 (YTCDHCQQDFESLADLTDHRAHRCPGD). Positions 110-123 (WVASSPSSKDVASP) are enriched in polar residues. C2H2-type zinc fingers lie at residues 146-168 (YPCQ…EQIH), 174-196 (FKCT…IKLH), 202-224 (YHCH…LKTH), 230-252 (FKCS…MQAH), 271-294 (FMCD…LTLH), 303-326 (LQCI…HQAH), and 331-353 (HKCP…LDSH). Positions 354 to 426 (RQPDSSNHSV…PLRGQKKMRD (73 aa)) are disordered. Positions 373–382 (ASMSSATPDS) are enriched in polar residues. Over residues 390–404 (SVASMSSATPDSSAS) the composition is skewed to low complexity. Residues 436-460 (YSCPYCSKRDFTSLAVLEIHLKTIH) form a C2H2-type 9; degenerate zinc finger. 3 C2H2-type zinc fingers span residues 468 to 491 (HTCQ…RKLH), 507 to 530 (FHCN…RVSH), and 544 to 567 (FFCN…QQAH). The C2H2-type 13; atypical zinc finger occupies 590-615 (YSCPYCTNSPIFGSILKLTKHIKENH). The segment at 617–654 (NIPLAHSKKSKAEQSPVSSDVEVSSPKRQRLSGSANSI) is disordered. Position 631 is a phosphoserine (Ser631). Low complexity predominate over residues 631–642 (SPVSSDVEVSSP). 7 C2H2-type zinc fingers span residues 659-681 (YPCN…LKLH), 689-711 (QACP…LTVH), 719-742 (YVCE…LDMH), 747-770 (YHCT…AVKH), 777-800 (YRCT…KHSH), 808-830 (HKCI…ITTH), and 834-857 (YNCR…REKH). A C2H2-type 21; degenerate zinc finger spans residues 913–935 (YGCDICGAAYTMEVLLQNHRLRD). 3 C2H2-type zinc fingers span residues 957-979 (HKCN…LQTH), 986-1008 (YMCP…KVTH), and 1047-1069 (FRCV…GTFH). At Ser1081 the chain carries Phosphoserine. The C2H2-type 25; degenerate zinc-finger motif lies at 1091 to 1109 (YKCALCLKEFRSKQDLVRL). 5 C2H2-type zinc fingers span residues 1147–1170 (LRCP…QVDH), 1195–1217 (YQCI…VANH), 1225–1247 (HECK…LIEH), 1256–1279 (FKCP…FAVH), and 1286–1309 (YDCS…MSQH). The span at 1163–1174 (ESHMQVDHRDLT) shows a compositional bias: basic and acidic residues. Positions 1163–1190 (ESHMQVDHRDLTPETSGPRKGAQTSPVP) are disordered.

It belongs to the krueppel C2H2-type zinc-finger protein family. In terms of assembly, homodimer. Interacts with PARP1, SMAD1 and SMAD4. Interacts with EBF1. Interacts with CEP290. In terms of tissue distribution, expressed in brain, eye, olfactory epithelium, spleen and heart. Expressed in the basal layer, consisting of neural precursor cells and immature sensory neurons of the olfactory epithelium, but not in the mature receptor cells.

It is found in the nucleus. Functionally, transcription factor that can both act as an activator or a repressor depending on the context. Plays a central role in BMP signaling and olfactory neurogenesis. Associates with SMADs in response to BMP2 leading to activate transcription of BMP target genes. Acts as a transcriptional repressor via its interaction with EBF1, a transcription factor involved in terminal olfactory receptor neurons differentiation; this interaction preventing EBF1 to bind DNA and activate olfactory-specific genes. Involved in olfactory neurogenesis by participating in a developmental switch that regulates the transition from differentiation to maturation in olfactory receptor neurons. Controls proliferation and differentiation of neural precursors in cerebellar vermis formation. This Rattus norvegicus (Rat) protein is Zinc finger protein 423 (Znf423).